A 38-amino-acid chain; its full sequence is Large ribosomal subunit protein bL36 (38 aa).

The protein belongs to the bacterial ribosomal protein bL36 family.

This is Large ribosomal subunit protein bL36 from Phytoplasma australiense.